The sequence spans 59 residues: Putative potassium channel toxin Ts25 (59 aa).

An N-terminal signal peptide occupies residues 1 to 22 (MKAFYGILIIFILISMIHLSQQ). Disulfide bonds link cysteine 29–cysteine 50, cysteine 35–cysteine 55, and cysteine 39–cysteine 57.

This sequence belongs to the short scorpion toxin superfamily. Potassium channel inhibitor family. Alpha-KTx 04 subfamily. Expressed by the venom gland.

It is found in the secreted. Potently blocks Kv1.1/KCNA1 (85%), Kv1.2/KCNA2 (91%), Kv1.3/KCNA3 (89%), Kv1.6/KCNA6 (94%), and Shaker (97%). In Tityus serrulatus (Brazilian scorpion), this protein is Putative potassium channel toxin Ts25.